We begin with the raw amino-acid sequence, 77 residues long: UPF0213 protein VNG_2274C (77 aa).

Residues 1–75 (MHHVYVIECS…KQLSRAQKEA (75 aa)) form the GIY-YIG domain.

It belongs to the UPF0213 family.

The polypeptide is UPF0213 protein VNG_2274C (Halobacterium salinarum (strain ATCC 700922 / JCM 11081 / NRC-1) (Halobacterium halobium)).